The sequence spans 497 residues: uncharacterized protein (497 aa).

A disordered region spans residues 58–79; it reads ISTRSFRNDGNDSDPQTLDPDA. 12 helical membrane passes run 86–106, 120–140, 155–175, 180–200, 222–242, 258–278, 309–329, 348–368, 378–398, 407–427, 438–458, and 468–488; these read IAFV…ALPI, FSGL…YPML, FRPL…YSLA, WLYL…MFLY, LNIL…GLLA, VGSW…SIFF, FMLV…AGYQ, GNFL…STFL, MLYG…LDVL, FVLY…LISL, ILVG…GAIC, and VGFI…LLFL.

The protein belongs to the major facilitator superfamily.

The protein resides in the membrane. This is an uncharacterized protein from Schizosaccharomyces pombe (strain 972 / ATCC 24843) (Fission yeast).